Consider the following 551-residue polypeptide: CTP synthase (551 aa).

An amidoligase domain region spans residues 1-273 (MKNTTNTKRT…DSKILELLNI (273 aa)). CTP is bound at residue Ser-21. Residue Ser-21 coordinates UTP. ATP is bound by residues 22-27 (SLGKGL) and Asp-79. Positions 79 and 147 each coordinate Mg(2+). Residues 154 to 156 (DIE), 194 to 199 (KTKPTQ), and Lys-230 each bind CTP. Residues 194–199 (KTKPTQ) and Lys-230 each bind UTP. In terms of domain architecture, Glutamine amidotransferase type-1 spans 298–551 (TIAITGKYVD…ISAAVANKKG (254 aa)). Gly-360 provides a ligand contact to L-glutamine. The active-site Nucleophile; for glutamine hydrolysis is Cys-387. L-glutamine contacts are provided by residues 388–391 (LGMQ), Glu-411, and Arg-479. Catalysis depends on residues His-524 and Glu-526.

It belongs to the CTP synthase family. In terms of assembly, homotetramer.

It catalyses the reaction UTP + L-glutamine + ATP + H2O = CTP + L-glutamate + ADP + phosphate + 2 H(+). The catalysed reaction is L-glutamine + H2O = L-glutamate + NH4(+). The enzyme catalyses UTP + NH4(+) + ATP = CTP + ADP + phosphate + 2 H(+). It functions in the pathway pyrimidine metabolism; CTP biosynthesis via de novo pathway; CTP from UDP: step 2/2. Allosterically activated by GTP, when glutamine is the substrate; GTP has no effect on the reaction when ammonia is the substrate. The allosteric effector GTP functions by stabilizing the protein conformation that binds the tetrahedral intermediate(s) formed during glutamine hydrolysis. Inhibited by the product CTP, via allosteric rather than competitive inhibition. Catalyzes the ATP-dependent amination of UTP to CTP with either L-glutamine or ammonia as the source of nitrogen. Regulates intracellular CTP levels through interactions with the four ribonucleotide triphosphates. The protein is CTP synthase of Desulfotalea psychrophila (strain LSv54 / DSM 12343).